The sequence spans 437 residues: CCA-adding enzyme (437 aa).

The ATP site is built by Ser-47 and Arg-50. CTP contacts are provided by Ser-47 and Arg-50. Residues Glu-59, Asp-61, and Asp-110 each coordinate Mg(2+). The ATP site is built by His-133, Lys-152, and Tyr-161. CTP-binding residues include His-133, Lys-152, and Tyr-161.

Belongs to the tRNA nucleotidyltransferase/poly(A) polymerase family. Archaeal CCA-adding enzyme subfamily. In terms of assembly, homodimer. Requires Mg(2+) as cofactor.

It catalyses the reaction a tRNA precursor + 2 CTP + ATP = a tRNA with a 3' CCA end + 3 diphosphate. It carries out the reaction a tRNA with a 3' CCA end + 2 CTP + ATP = a tRNA with a 3' CCACCA end + 3 diphosphate. In terms of biological role, catalyzes the addition and repair of the essential 3'-terminal CCA sequence in tRNAs without using a nucleic acid template. Adds these three nucleotides in the order of C, C, and A to the tRNA nucleotide-73, using CTP and ATP as substrates and producing inorganic pyrophosphate. tRNA 3'-terminal CCA addition is required both for tRNA processing and repair. Also involved in tRNA surveillance by mediating tandem CCA addition to generate a CCACCA at the 3' terminus of unstable tRNAs. While stable tRNAs receive only 3'-terminal CCA, unstable tRNAs are marked with CCACCA and rapidly degraded. The structural flexibility of RNA controls the choice between CCA versus CCACCA addition: following the first CCA addition cycle, nucleotide-binding to the active site triggers a clockwise screw motion, producing torque on the RNA. This ejects stable RNAs, whereas unstable RNAs are refolded while bound to the enzyme and subjected to a second CCA catalytic cycle. This chain is CCA-adding enzyme, found in Archaeoglobus fulgidus (strain ATCC 49558 / DSM 4304 / JCM 9628 / NBRC 100126 / VC-16).